A 332-amino-acid chain; its full sequence is MEVHGSGFRRILLLALCISGIWSAYIYQGVLQETLSTKRFGPDEKRFEHLAFLNLAQSVVCLIWSYIMIKLWSNAGNGGAPWWTYWSAGITNTIGPAMGIEALKYISYPAQVLAKSSKMIPVMLMGTLVYGIRYTFPEYMCTFLVAGGVSIFALLKTSSKTISKLAHPNAPLGYALCSLNLAFDGFTNATQDSIASRYPKTEAWDIMLGMNLWGTIYNMIYMFGLPQGIGFKAIQFCKLHPEAAWDILKYCICGAVGQNFIFMTISNFGSLANTTITTTRKFVSIVVSSVMSGNPLSLKQWGCVSMVFGGLAYQIYLKWKKLQRVEKKKQKS.

Transmembrane regions (helical) follow at residues I11 to L31, H49 to I69, A80 to I100, V112 to I132, T135 to L155, I206 to P226, I252 to A272, and W301 to L317. The short motif at K327–S332 is the Di-lysine motif element.

The protein belongs to the nucleotide-sugar transporter family. UDP-galactose:UMP antiporter (TC 2.A.7.11) subfamily.

The protein localises to the endoplasmic reticulum membrane. Its function is as follows. Essential sugar transporter required for the transport of UDP-galactose and UDP-glucose from the cytoplasm into the Golgi and the endoplasmic reticulum, to ensure quality control of protein folding. Essential for pollen development and involved in embryo sac progress. This chain is UDP-galactose/UDP-glucose transporter 1, found in Arabidopsis thaliana (Mouse-ear cress).